A 199-amino-acid polypeptide reads, in one-letter code: Recombination protein RecR (199 aa).

A C4-type zinc finger spans residues 57 to 72; it reads CSVCGNITEQDPCAIC. The 97-residue stretch at 80–176 folds into the Toprim domain; it reads STIMVVEEAK…KVTRLAAGLA (97 aa).

The protein belongs to the RecR family.

Its function is as follows. May play a role in DNA repair. It seems to be involved in an RecBC-independent recombinational process of DNA repair. It may act with RecF and RecO. This chain is Recombination protein RecR, found in Lactobacillus delbrueckii subsp. bulgaricus (strain ATCC BAA-365 / Lb-18).